A 620-amino-acid chain; its full sequence is Dopamine beta-hydroxylase (620 aa).

Over 1-19 (MQPHLSHQPCWSLPSPSVR) the chain is Cytoplasmic. The helical; Signal-anchor for type II membrane protein transmembrane segment at 20-40 (EAASMYGTAVAIFLVILVAAL) threads the bilayer. Topologically, residues 41–620 (QGSEPPESPF…FVVITHGGRH (580 aa)) are intragranular. One can recognise a DOMON domain in the interval 60–176 (GTLELSWNVS…DTVHLVYGIL (117 aa)). N-linked (GlcNAc...) asparagine glycosylation is found at Asn-67 and Asn-187. 6 disulfide bridges follow: Cys-157–Cys-599, Cys-235–Cys-286, Cys-272–Cys-298, Cys-393–Cys-506, Cys-397–Cys-568, and Cys-469–Cys-491. Tyr-233 is an active-site residue. His-265 and His-266 together coordinate Cu(2+). The N-linked (GlcNAc...) asparagine glycan is linked to Asn-274. His-336 is a Cu(2+) binding site. A Phosphoserine; by CaMK modification is found at Ser-349. Residue His-415 is part of the active site. Cu(2+)-binding residues include His-415 and His-417. A glycan (N-linked (GlcNAc...) asparagine) is linked at Asn-475. Residue Met-490 participates in Cu(2+) binding. Asn-569 and Asn-587 each carry an N-linked (GlcNAc...) asparagine glycan.

The protein belongs to the copper type II ascorbate-dependent monooxygenase family. Homotetramer; composed of two disulfide-linked dimers. Cu(2+) is required as a cofactor. Post-translationally, proteolytic cleavage after the membrane-anchor leads to the release of the soluble form. N-glycosylated. As to expression, chromaffin granules of the adrenal medulla and synaptic vesicles of the sympathetic nervous system.

It localises to the cytoplasmic vesicle. It is found in the secretory vesicle lumen. The protein localises to the secretory vesicle. Its subcellular location is the chromaffin granule lumen. The protein resides in the secreted. It localises to the secretory vesicle membrane. It is found in the chromaffin granule membrane. It carries out the reaction dopamine + 2 L-ascorbate + O2 = (R)-noradrenaline + 2 monodehydro-L-ascorbate radical + H2O. It functions in the pathway catecholamine biosynthesis; (R)-noradrenaline biosynthesis; (R)-noradrenaline from dopamine: step 1/1. In terms of biological role, catalyzes the hydroxylation of dopamine to noradrenaline (also known as norepinephrine), and is thus vital for regulation of these neurotransmitters. The protein is Dopamine beta-hydroxylase (Dbh) of Rattus norvegicus (Rat).